The chain runs to 78 residues: Beta-defensin 29 (78 aa).

Residues 1-23 (MPVTKPYFVTVAVLLILVDKTTG) form the signal peptide. 3 disulfide bridges follow: cysteine 40–cysteine 67, cysteine 47–cysteine 61, and cysteine 51–cysteine 68.

It belongs to the beta-defensin family.

The protein localises to the secreted. In terms of biological role, has antibacterial activity. The polypeptide is Beta-defensin 29 (Defb29) (Rattus norvegicus (Rat)).